A 228-amino-acid chain; its full sequence is Chaperone protein FanE (228 aa).

An N-terminal signal peptide occupies residues 1–19 (MNKFISIIALCVFSSYANA). Cysteine 157 and cysteine 198 are disulfide-bonded.

This sequence belongs to the periplasmic pilus chaperone family.

It is found in the periplasm. In terms of biological role, mediates assembly of pili by forming soluble multimeric complexes with pili subunits as an intermediate step in the assembly process. This protein is involved in K99 pili assembly. This chain is Chaperone protein FanE (fanE), found in Escherichia coli.